The sequence spans 418 residues: Protein fuzzy homolog (418 aa).

The protein belongs to the fuzzy family. As to quaternary structure, component of the CPLANE (ciliogenesis and planar polarity effectors) complex, composed of INTU, FUZ and WDPCP. Interacts with CPLANE2. Interacts with CPLANE1.

The protein localises to the cytoplasm. It is found in the cytoskeleton. Its subcellular location is the cilium basal body. In terms of biological role, probable planar cell polarity effector involved in cilium biogenesis. May regulate protein and membrane transport to the cilium. Proposed to function as core component of the CPLANE (ciliogenesis and planar polarity effectors) complex involved in the recruitment of peripheral IFT-A proteins to basal bodies. May regulate the morphogenesis of hair follicles which depends on functional primary cilia. Binds phosphatidylinositol 3-phosphate with highest affinity, followed by phosphatidylinositol 4-phosphate and phosphatidylinositol 5-phosphate. This Homo sapiens (Human) protein is Protein fuzzy homolog (FUZ).